The sequence spans 561 residues: DNA ligase B (561 aa).

The active-site N6-AMP-lysine intermediate is the Lys-128.

This sequence belongs to the NAD-dependent DNA ligase family. LigB subfamily.

It carries out the reaction NAD(+) + (deoxyribonucleotide)n-3'-hydroxyl + 5'-phospho-(deoxyribonucleotide)m = (deoxyribonucleotide)n+m + AMP + beta-nicotinamide D-nucleotide.. Its function is as follows. Catalyzes the formation of phosphodiester linkages between 5'-phosphoryl and 3'-hydroxyl groups in double-stranded DNA using NAD as a coenzyme and as the energy source for the reaction. The polypeptide is DNA ligase B (Pseudomonas syringae pv. syringae (strain B728a)).